The sequence spans 492 residues: Trypanothione reductase (492 aa).

35–52 (DVQTHHGPPHYAALGGTC) lines the FAD pocket. Cysteine 52 and cysteine 57 are disulfide-bonded. Histidine 461 (proton acceptor) is an active-site residue.

Belongs to the class-I pyridine nucleotide-disulfide oxidoreductase family. Homodimer. FAD serves as cofactor.

The protein localises to the cytoplasm. It catalyses the reaction trypanothione + NADP(+) = trypanothione disulfide + NADPH + H(+). Its function is as follows. Trypanothione is the parasite analog of glutathione; this enzyme is the equivalent of glutathione reductase. This chain is Trypanothione reductase (TPR), found in Trypanosoma brucei brucei.